The chain runs to 293 residues: ATP synthase gamma chain (293 aa).

This sequence belongs to the ATPase gamma chain family. In terms of assembly, F-type ATPases have 2 components, CF(1) - the catalytic core - and CF(0) - the membrane proton channel. CF(1) has five subunits: alpha(3), beta(3), gamma(1), delta(1), epsilon(1). CF(0) has three main subunits: a, b and c.

The protein resides in the cell membrane. Its function is as follows. Produces ATP from ADP in the presence of a proton gradient across the membrane. The gamma chain is believed to be important in regulating ATPase activity and the flow of protons through the CF(0) complex. The protein is ATP synthase gamma chain of Streptococcus agalactiae serotype Ia (strain ATCC 27591 / A909 / CDC SS700).